Here is a 317-residue protein sequence, read N- to C-terminus: Melanocyte-stimulating hormone receptor (317 aa).

Residues 1–37 (MPAQGSQRGLLGAVNFTPTATPHLRPAANQTGPQCLE) lie on the Extracellular side of the membrane. N29 is a glycosylation site (N-linked (GlcNAc...) asparagine). The chain crosses the membrane as a helical span at residues 38–63 (VSVPDGLFLCLGLVSLVENTLVVAAI). At 64 to 72 (AKNRNLHSP) the chain is on the cytoplasmic side. Residues 73-93 (MYCFICCLALSDLLVSVSNLL) form a helical membrane-spanning segment. The Extracellular segment spans residues 94–118 (ETAVLLLLEVGALAAQATVVQQLGN). The helical transmembrane segment at 119–140 (VIDVLICSSMVSSLCSLGAIAM) threads the bilayer. The Cytoplasmic portion of the chain corresponds to 141 to 163 (DRYISIFYALRYHSIVTLARARR). A helical membrane pass occupies residues 164-183 (AIAAVWAASILSSTLFITYY). Residues 184–191 (DRTAALLC) are Extracellular-facing. Residues 192–211 (LVVFFLAMLVLMALLYVHML) traverse the membrane as a helical segment. Over 212–240 (IQACQHAQAIARLHKRQHPVQQGWGLKGA) the chain is Cytoplasmic. A helical membrane pass occupies residues 241-266 (ATLTILLGVFFLCWGPFFLHLTLIAV). The Extracellular portion of the chain corresponds to 267–279 (CPQHPTCSCIFKN). Residues 280–300 (FRLFLALIICNTIVDPLIYAF) traverse the membrane as a helical segment. Topologically, residues 301 to 317 (RSQELRRTLKEVLLFSW) are cytoplasmic.

The protein belongs to the G-protein coupled receptor 1 family. As to quaternary structure, interacts with MGRN1, but does not undergo MGRN1-mediated ubiquitination; this interaction competes with GNAS-binding and thus inhibits agonist-induced cAMP production. Interacts with OPN3; the interaction results in a decrease in MC1R-mediated cAMP signaling and ultimately a decrease in melanin production in melanocytes.

The protein localises to the cell membrane. Functionally, receptor for MSH (alpha, beta and gamma) and ACTH. The activity of this receptor is mediated by G proteins which activate adenylate cyclase. Mediates melanogenesis, the production of eumelanin (black/brown) and phaeomelanin (red/yellow), via regulation of cAMP signaling in melanocytes. The sequence is that of Melanocyte-stimulating hormone receptor (MC1R) from Eulemur fulvus fulvus (Brown lemur).